The following is a 433-amino-acid chain: 3-phosphoshikimate 1-carboxyvinyltransferase (433 aa).

The 3-phosphoshikimate site is built by lysine 21, serine 22, and arginine 26. Lysine 21 provides a ligand contact to phosphoenolpyruvate. Phosphoenolpyruvate is bound by residues glycine 96 and arginine 124. 3-phosphoshikimate contacts are provided by serine 167, serine 168, glutamine 169, serine 195, aspartate 310, and lysine 337. Residue glutamine 169 coordinates phosphoenolpyruvate. Aspartate 310 serves as the catalytic Proton acceptor. Phosphoenolpyruvate-binding residues include arginine 341, arginine 384, and lysine 410.

It belongs to the EPSP synthase family. As to quaternary structure, monomer.

It is found in the cytoplasm. The catalysed reaction is 3-phosphoshikimate + phosphoenolpyruvate = 5-O-(1-carboxyvinyl)-3-phosphoshikimate + phosphate. Its pathway is metabolic intermediate biosynthesis; chorismate biosynthesis; chorismate from D-erythrose 4-phosphate and phosphoenolpyruvate: step 6/7. Functionally, catalyzes the transfer of the enolpyruvyl moiety of phosphoenolpyruvate (PEP) to the 5-hydroxyl of shikimate-3-phosphate (S3P) to produce enolpyruvyl shikimate-3-phosphate and inorganic phosphate. The sequence is that of 3-phosphoshikimate 1-carboxyvinyltransferase from Clostridium botulinum (strain Eklund 17B / Type B).